Reading from the N-terminus, the 133-residue chain is Large ribosomal subunit protein bL12 (133 aa).

This sequence belongs to the bacterial ribosomal protein bL12 family. Homodimer. Part of the ribosomal stalk of the 50S ribosomal subunit. Forms a multimeric L10(L12)X complex, where L10 forms an elongated spine to which 2 to 4 L12 dimers bind in a sequential fashion. Binds GTP-bound translation factors.

In terms of biological role, forms part of the ribosomal stalk which helps the ribosome interact with GTP-bound translation factors. Is thus essential for accurate translation. This chain is Large ribosomal subunit protein bL12, found in Ehrlichia chaffeensis (strain ATCC CRL-10679 / Arkansas).